The chain runs to 488 residues: ATP synthase subunit beta (488 aa).

164–171 (GGAGVGKT) is a binding site for ATP.

The protein belongs to the ATPase alpha/beta chains family. As to quaternary structure, F-type ATPases have 2 components, CF(1) - the catalytic core - and CF(0) - the membrane proton channel. CF(1) has five subunits: alpha(3), beta(3), gamma(1), delta(1), epsilon(1). CF(0) has four main subunits: a(1), b(1), b'(1) and c(9-12).

The protein localises to the cellular thylakoid membrane. It carries out the reaction ATP + H2O + 4 H(+)(in) = ADP + phosphate + 5 H(+)(out). In terms of biological role, produces ATP from ADP in the presence of a proton gradient across the membrane. The catalytic sites are hosted primarily by the beta subunits. The chain is ATP synthase subunit beta from Prochlorococcus marinus (strain NATL2A).